A 142-amino-acid chain; its full sequence is Hemoglobin subunit alpha-1 (142 aa).

S1 is subject to N-acetylserine. Positions 1–142 constitute a Globin domain; that stretch reads SLSDKDKAAV…VALALAERYR (142 aa). H59 contributes to the O2 binding site. A heme b-binding site is contributed by H88.

It belongs to the globin family. Hb1 is a heterotetramer of two alpha-1 chains and two beta chains. HbC is a heterotetramer of two alpha-1 chains and two beta-C chains. As to expression, red blood cells.

Functionally, involved in oxygen transport from gills to the various peripheral tissues. The sequence is that of Hemoglobin subunit alpha-1 (hba1) from Trematomus newnesi (Dusky notothen).